Consider the following 1074-residue polypeptide: Calcium-transporting ATPase 8, plasma membrane-type (1074 aa).

Residues 1–33 (MTSLLKSSPGRRRGGDVESGKSEHADSDSDTFY) form a disordered region. Residues 1 to 180 (MTSLLKSSPG…NTYPRKKGKG (180 aa)) lie on the Cytoplasmic side of the membrane. Residues 13–27 (RGGDVESGKSEHADS) show a composition bias toward basic and acidic residues. The interval 43 to 54 (RLQQWRKAALVL) is interaction with calmodulin. Residues 181 to 201 (FLRFLWDACHDLTLIILMVAA) form a helical membrane-spanning segment. The Extracellular portion of the chain corresponds to 202–219 (VASLALGIKTEGIKEGWY). The helical transmembrane segment at 220–240 (DGGSIAFAVILVIVVTAVSDY) threads the bilayer. The Cytoplasmic segment spans residues 241 to 369 (KQSLQFQNLN…GEETPLQVRL (129 aa)). Residues 370 to 389 (NGVATFIGSIGLAVAAAVLV) form a helical membrane-spanning segment. Topologically, residues 390 to 426 (ILLTRYFTGHTKDNNGGPQFVKGKTKVGHVIDDVVKV) are extracellular. The helical transmembrane segment at 427–444 (LTVAVTIVVVAVPEGLPL) threads the bilayer. Residues 445 to 840 (AVTLTLAYSM…RWGRSVYANI (396 aa)) lie on the Cytoplasmic side of the membrane. D482 acts as the 4-aspartylphosphate intermediate in catalysis. Mg(2+) contacts are provided by D785 and D789. A helical transmembrane segment spans residues 841 to 859 (QKFIQFQLTVNVAALVINV). The Extracellular segment spans residues 860–870 (VAAISSGDVPL). Residues 871–891 (TAVQLLWVNLIMDTLGALALA) traverse the membrane as a helical segment. Topologically, residues 892–911 (TEPPTDHLMGRPPVGRKEPL) are cytoplasmic. The helical transmembrane segment at 912–934 (ITNIMWRNLLIQAIYQVSVLLTL) threads the bilayer. The Extracellular segment spans residues 935-949 (NFRGISILGLEHEVH). Residues 950-971 (EHATRVKNTIIFNAFVLCQAFN) form a helical membrane-spanning segment. At 972 to 989 (EFNARKPDEKNIFKGVIK) the chain is on the cytoplasmic side. Residues 990 to 1011 (NRLFMGIIVITLVLQVIIVEFL) form a helical membrane-spanning segment. The Extracellular portion of the chain corresponds to 1012-1021 (GKFASTTKLN). A helical transmembrane segment spans residues 1022–1043 (WKQWLICVGIGVISWPLALVGK). Residues 1044–1074 (FIPVPAAPISNKLKVLKFWGKKKNSSGEGSL) are Cytoplasmic-facing.

The protein belongs to the cation transport ATPase (P-type) (TC 3.A.3) family. Type IIB subfamily.

Its subcellular location is the cell membrane. It catalyses the reaction Ca(2+)(in) + ATP + H2O = Ca(2+)(out) + ADP + phosphate + H(+). Its activity is regulated as follows. Activated by calmodulin. This magnesium-dependent enzyme catalyzes the hydrolysis of ATP coupled with the translocation of calcium from the cytosol out of the cell. The polypeptide is Calcium-transporting ATPase 8, plasma membrane-type (ACA8) (Arabidopsis thaliana (Mouse-ear cress)).